The chain runs to 416 residues: Na(+)/H(+) antiporter NhaA (416 aa).

The next 11 helical transmembrane spans lie at 39–59 (GIVL…PWAA), 82–102 (LHFW…GLEI), 119–139 (LPVL…LALV), 146–166 (GWAV…ALLG), 175–195 (VFLL…IALF), 198–218 (GGLQ…VLLL), 234–254 (AVLW…GVVL), 281–301 (PWVT…VALG), 315–335 (LLMA…VLLA), 353–373 (WGGL…AIFI), and 390–410 (GVLL…WWLQ).

Belongs to the NhaA Na(+)/H(+) (TC 2.A.33) antiporter family.

It localises to the cell inner membrane. The enzyme catalyses Na(+)(in) + 2 H(+)(out) = Na(+)(out) + 2 H(+)(in). Its function is as follows. Na(+)/H(+) antiporter that extrudes sodium in exchange for external protons. The sequence is that of Na(+)/H(+) antiporter NhaA from Acidovorax sp. (strain JS42).